A 106-amino-acid polypeptide reads, in one-letter code: Small ribosomal subunit protein uS10 (106 aa).

This sequence belongs to the universal ribosomal protein uS10 family. In terms of assembly, part of the 30S ribosomal subunit.

In terms of biological role, involved in the binding of tRNA to the ribosomes. The polypeptide is Small ribosomal subunit protein uS10 (Prochlorococcus marinus (strain MIT 9303)).